The sequence spans 346 residues: Methylthioribose-1-phosphate isomerase 1 (346 aa).

Substrate contacts are provided by residues 48 to 50, Arg-91, and Gln-196; that span reads RGA. The active-site Proton donor is Asp-237. 247–248 contacts substrate; the sequence is NK.

This sequence belongs to the eIF-2B alpha/beta/delta subunits family. MtnA subfamily.

The enzyme catalyses 5-(methylsulfanyl)-alpha-D-ribose 1-phosphate = 5-(methylsulfanyl)-D-ribulose 1-phosphate. Its pathway is amino-acid biosynthesis; L-methionine biosynthesis via salvage pathway; L-methionine from S-methyl-5-thio-alpha-D-ribose 1-phosphate: step 1/6. Catalyzes the interconversion of methylthioribose-1-phosphate (MTR-1-P) into methylthioribulose-1-phosphate (MTRu-1-P). This is Methylthioribose-1-phosphate isomerase 1 from Pseudothermotoga lettingae (strain ATCC BAA-301 / DSM 14385 / NBRC 107922 / TMO) (Thermotoga lettingae).